We begin with the raw amino-acid sequence, 302 residues long: Aurora/IPL1-related protein kinase 2 (302 aa).

The segment covering Met1–Asn17 has biased composition (polar residues). Residues Met1–Ser23 form a disordered region. Residues Phe27–Val277 enclose the Protein kinase domain. Residues Leu33–Val41 and Lys56 contribute to the ATP site. Residue Asp150 is the Proton acceptor of the active site.

It belongs to the protein kinase superfamily. Ser/Thr protein kinase family. As to quaternary structure, interacts with zen-4 and icp-1. Part of a complex containing at least air-2; icp-1; csc-1 and bir-1. Interacts with tlk-1 and bmk-1.

It is found in the cytoplasm. Its subcellular location is the cytoskeleton. It localises to the chromosome. The protein localises to the midbody. It carries out the reaction L-seryl-[protein] + ATP = O-phospho-L-seryl-[protein] + ADP + H(+). It catalyses the reaction L-threonyl-[protein] + ATP = O-phospho-L-threonyl-[protein] + ADP + H(+). Functionally, serine/threonine-protein kinase which mediates both meiotic and mitotic chromosome segregation. Required for histone H3 'Ser-10' phosphorylation. Phosphorylates tlk-1 and zen-4. In Caenorhabditis briggsae, this protein is Aurora/IPL1-related protein kinase 2 (air-2).